The sequence spans 278 residues: UPF0758 protein BURPS1106A_0984 (278 aa).

Positions 1–64 (MQYEIVSAGE…ATAAARRGRD (64 aa)) are disordered. Positions 22-59 (AAAPAAPSSAVPSSAALSSAALSSAAQPTGAPPATAAA) are enriched in low complexity. Positions 156–278 (LVDSPGAVDD…TFSFAQAGWI (123 aa)) constitute an MPN domain. Zn(2+)-binding residues include H227, H229, and D240. The JAMM motif signature appears at 227–240 (HNHPSGAVRPSAAD).

Belongs to the UPF0758 family.

This is UPF0758 protein BURPS1106A_0984 from Burkholderia pseudomallei (strain 1106a).